We begin with the raw amino-acid sequence, 226 residues long: HTH-type transcriptional regulator TcmR (226 aa).

A compositionally biased stretch (polar residues) spans 1-16 (MDSAETDTPSTRSTPN). The interval 1–25 (MDSAETDTPSTRSTPNGPGLRQRKL) is disordered. Positions 26–86 (RRTRDQLIRE…TPISAIDEAF (61 aa)) constitute an HTH tetR-type domain. Residues 49 to 68 (TVEQIAEAVEVHPRTFFRHF) constitute a DNA-binding region (H-T-H motif).

Its pathway is antibiotic biosynthesis; tetracenomycin C biosynthesis. Functionally, represses transcription of the divergently oriented tcmR and tcmA (tetracenomycin C resistance and export) genes by binding to an intergenic operator region. This binding is inhibited by tetracenomycin C. This chain is HTH-type transcriptional regulator TcmR (tcmR), found in Streptomyces glaucescens.